The primary structure comprises 547 residues: MAAKDVKFGNDARVKMLKGVNVLADAVKVTLGPKGRNVVLDKAYGAPTITKDGVSVAREIELEDKFENMGAQMVKEVASKANDAAGDGTTTATVLAQAIVNEGLKAVAAGMNPMDLKRGIDKAVVAVVEELKAISKPCETSKEIEQVGTISANSDETVGKLIAQAMEKVGKEGVITVEDGTGLDDALDVVEGMQFDRGYLSPYFINKPEAGTVELENPYIILVDKKISNIREILPVLEAVAKAGKPLLIVAEDIEGEALATLVVNTMRGIVKVAAVKAPGFGDRRKAMLQDIAILTAGTVISEEIGMELEKATLEELGQAKRVVITKDNTTIIDGIGDEAQIKARVAQIRQQIEDSTSDYDKEKLQERVAKLACGVAVIKVGAATEVAMKEKKDRVDDALHATRAAVEEGIVPGGGVALVRAASKVAATLTGDNEEQNVGIKLALRAMEAPLRQIVTNAGEEASVVARNVKDGNGNYGYNAGTEQYGDMLEMGILDPTKVTRSALQFAASIAGLMITTECMITDLPKEEKLDPAAAMGGMGGMGGMI.

ATP contacts are provided by residues 30–33, K51, 87–91, G415, and D496; these read TLGP and DGTTT.

The protein belongs to the chaperonin (HSP60) family. As to quaternary structure, forms a cylinder of 14 subunits composed of two heptameric rings stacked back-to-back. Interacts with the co-chaperonin GroES.

The protein resides in the cytoplasm. It catalyses the reaction ATP + H2O + a folded polypeptide = ADP + phosphate + an unfolded polypeptide.. In terms of biological role, together with its co-chaperonin GroES, plays an essential role in assisting protein folding. The GroEL-GroES system forms a nano-cage that allows encapsulation of the non-native substrate proteins and provides a physical environment optimized to promote and accelerate protein folding. The polypeptide is Chaperonin GroEL (Actinobacillus pleuropneumoniae serotype 5b (strain L20)).